The primary structure comprises 116 residues: Carbohydrate-binding protein AQN-3 (116 aa).

The cysteines at positions 9 and 30 are disulfide-linked. In terms of domain architecture, CUB spans Cys9–Ile110. Asn50 carries N-linked (GlcNAc...) asparagine glycosylation. Residues Cys53 and Cys74 are joined by a disulfide bond. His85 is modified (methylhistidine).

The protein belongs to the spermadhesin family. The residue at position 85 was identified as a methylhistidine by mass spectrometry.

The protein resides in the secreted. Functionally, AQN proteins mediate the binding of boar spermatozoa to component(s) of the egg's zona pellucida by a carbohydrate-binding mechanism. AQN proteins are secretory components of the male accessory glands being coated to the sperm surface at the time of ejaculation. They possess as well heparin-, serine-protease-inhibitor-binding capability. In Sus scrofa (Pig), this protein is Carbohydrate-binding protein AQN-3.